The following is a 472-amino-acid chain: UDP-glycosyltransferase 100 (472 aa).

The active-site Proton acceptor is the histidine 15. Position 15 (histidine 15) interacts with an anthocyanidin. The active-site Charge relay is the aspartate 117. Residues alanine 344, glutamine 346, histidine 361, tryptophan 364, asparagine 365, serine 366, and glutamate 369 each coordinate UDP-alpha-D-glucose. Glycine 384 is an an anthocyanidin binding site. UDP-alpha-D-glucose-binding residues include glutamate 385 and glutamine 386.

It belongs to the UDP-glycosyltransferase family.

It catalyses the reaction (20S)-protopanaxadiol + UDP-alpha-D-glucose = (20S)-ginsenoside C-K + UDP + H(+). The enzyme catalyses (20S)-protopanaxatriol + UDP-alpha-D-glucose = (20S)-ginsenoside Rh1 + UDP + H(+). It carries out the reaction (20S)-ginsenoside F1 + UDP-alpha-D-glucose = (20S)-ginsenoside Rg1 + UDP + H(+). It functions in the pathway secondary metabolite biosynthesis; terpenoid biosynthesis. In terms of biological role, component of the dammarane-type triterpene saponins (e.g. PPT-type ginsenosides or panaxosides) biosynthetic pathway. Glycosyltransferase that catalyzes the biosynthesis of ginsenoside Rh1 from protopanaxatriol (PPT) and the conversion of ginsenoside F1 to ginsenoside Rg1. In Panax ginseng (Korean ginseng), this protein is UDP-glycosyltransferase 100.